A 503-amino-acid polypeptide reads, in one-letter code: WD repeat-containing protein 55 homolog (503 aa).

2 disordered regions span residues 1-21 and 35-132; these read MHTH…DLDD and ALVG…DDLD. Composition is skewed to acidic residues over residues 12–21, 40–50, and 78–96; these read DADELDDLDD, DVSDSDIDEHD, and NAED…DEAE. WD repeat units follow at residues 157 to 196, 201 to 242, 244 to 282, 285 to 324, 327 to 366, and 411 to 450; these read KLED…NKLL, VHSK…KLYE, AHDD…PIFE, EVED…LYVQ, PYEE…YHCD, and QHNM…DFGD. The segment at 483-503 is disordered; the sequence is TKEDEDNADNNDAAAGPSNSA.

This sequence belongs to the WD repeat WDR55 family.

The protein is WD repeat-containing protein 55 homolog of Drosophila persimilis (Fruit fly).